Reading from the N-terminus, the 334-residue chain is Holliday junction branch migration complex subunit RuvB (334 aa).

The interval 4 to 184 (ADRLIQPQIQ…FGIPLRLEFY (181 aa)) is large ATPase domain (RuvB-L). ATP is bound by residues Arg24, Gly65, Lys68, Thr69, Thr70, 131–133 (EDY), Arg174, Tyr184, and Arg221. Thr69 provides a ligand contact to Mg(2+). The tract at residues 185-255 (NIKDLSTIVT…VAEHALDLLD (71 aa)) is small ATPAse domain (RuvB-S). Residues 258–334 (SEGFDYMDRK…YQHFELIKPE (77 aa)) form a head domain (RuvB-H) region. Residues Arg294, Arg313, and Arg318 each contribute to the DNA site.

It belongs to the RuvB family. In terms of assembly, homohexamer. Forms an RuvA(8)-RuvB(12)-Holliday junction (HJ) complex. HJ DNA is sandwiched between 2 RuvA tetramers; dsDNA enters through RuvA and exits via RuvB. An RuvB hexamer assembles on each DNA strand where it exits the tetramer. Each RuvB hexamer is contacted by two RuvA subunits (via domain III) on 2 adjacent RuvB subunits; this complex drives branch migration. In the full resolvosome a probable DNA-RuvA(4)-RuvB(12)-RuvC(2) complex forms which resolves the HJ.

The protein resides in the cytoplasm. It carries out the reaction ATP + H2O = ADP + phosphate + H(+). In terms of biological role, the RuvA-RuvB-RuvC complex processes Holliday junction (HJ) DNA during genetic recombination and DNA repair, while the RuvA-RuvB complex plays an important role in the rescue of blocked DNA replication forks via replication fork reversal (RFR). RuvA specifically binds to HJ cruciform DNA, conferring on it an open structure. The RuvB hexamer acts as an ATP-dependent pump, pulling dsDNA into and through the RuvAB complex. RuvB forms 2 homohexamers on either side of HJ DNA bound by 1 or 2 RuvA tetramers; 4 subunits per hexamer contact DNA at a time. Coordinated motions by a converter formed by DNA-disengaged RuvB subunits stimulates ATP hydrolysis and nucleotide exchange. Immobilization of the converter enables RuvB to convert the ATP-contained energy into a lever motion, pulling 2 nucleotides of DNA out of the RuvA tetramer per ATP hydrolyzed, thus driving DNA branch migration. The RuvB motors rotate together with the DNA substrate, which together with the progressing nucleotide cycle form the mechanistic basis for DNA recombination by continuous HJ branch migration. Branch migration allows RuvC to scan DNA until it finds its consensus sequence, where it cleaves and resolves cruciform DNA. The chain is Holliday junction branch migration complex subunit RuvB from Shewanella baltica (strain OS195).